Reading from the N-terminus, the 79-residue chain is Acyl carrier protein (79 aa).

Residues 2-77 (SDIEERVKKI…SAIDYVNAHK (76 aa)) form the Carrier domain. At Ser37 the chain carries O-(pantetheine 4'-phosphoryl)serine.

This sequence belongs to the acyl carrier protein (ACP) family. Post-translationally, 4'-phosphopantetheine is transferred from CoA to a specific serine of apo-ACP by AcpS. This modification is essential for activity because fatty acids are bound in thioester linkage to the sulfhydryl of the prosthetic group.

The protein resides in the cytoplasm. It functions in the pathway lipid metabolism; fatty acid biosynthesis. In terms of biological role, carrier of the growing fatty acid chain in fatty acid biosynthesis. The polypeptide is Acyl carrier protein (Pseudoalteromonas atlantica (strain T6c / ATCC BAA-1087)).